The following is a 248-amino-acid chain: tRNA pseudouridine synthase A (248 aa).

D53 functions as the Nucleophile in the catalytic mechanism. Y111 is a substrate binding site.

Belongs to the tRNA pseudouridine synthase TruA family. In terms of assembly, homodimer.

The enzyme catalyses uridine(38/39/40) in tRNA = pseudouridine(38/39/40) in tRNA. Its function is as follows. Formation of pseudouridine at positions 38, 39 and 40 in the anticodon stem and loop of transfer RNAs. In Streptococcus thermophilus (strain ATCC BAA-491 / LMD-9), this protein is tRNA pseudouridine synthase A.